The sequence spans 167 residues: Transcription initiation factor TFIID subunit 10 (167 aa).

Disordered regions lie at residues 1–56 (MASD…EESE) and 119–139 (TTNIQHSSGHSSSKDKKNPKD). A compositionally biased stretch (acidic residues) spans 41–56 (EQPDVEEVPLTTEESE). Positions 130–139 (SSKDKKNPKD) are enriched in basic and acidic residues.

This sequence belongs to the TAF10 family. Belongs to the TFIID complex which is composed of TATA binding protein (Tbp) and a number of TBP-associated factors (TAFs). Also a member of the histone acetylase (HAT) complex. In terms of tissue distribution, at embryonic stage 9, highest expression is detected within the ectoderm, ventral chord, and anterior foregut primordium. Later in development preferential expression is in the foregut, proventriculus, and central nervous system. Coexpressed with Taf10b in the lateral epidermis and anal plate.

The protein localises to the cytoplasm. It localises to the nucleus. TFIID is a multimeric protein complex that plays a central role in mediating promoter responses to various activators and repressors. This chain is Transcription initiation factor TFIID subunit 10, found in Drosophila melanogaster (Fruit fly).